The primary structure comprises 156 residues: ATP synthase subunit b (156 aa).

Residues Ile3 to Thr23 traverse the membrane as a helical segment.

It belongs to the ATPase B chain family. F-type ATPases have 2 components, F(1) - the catalytic core - and F(0) - the membrane proton channel. F(1) has five subunits: alpha(3), beta(3), gamma(1), delta(1), epsilon(1). F(0) has three main subunits: a(1), b(2) and c(10-14). The alpha and beta chains form an alternating ring which encloses part of the gamma chain. F(1) is attached to F(0) by a central stalk formed by the gamma and epsilon chains, while a peripheral stalk is formed by the delta and b chains.

Its subcellular location is the cell inner membrane. Its function is as follows. F(1)F(0) ATP synthase produces ATP from ADP in the presence of a proton or sodium gradient. F-type ATPases consist of two structural domains, F(1) containing the extramembraneous catalytic core and F(0) containing the membrane proton channel, linked together by a central stalk and a peripheral stalk. During catalysis, ATP synthesis in the catalytic domain of F(1) is coupled via a rotary mechanism of the central stalk subunits to proton translocation. Functionally, component of the F(0) channel, it forms part of the peripheral stalk, linking F(1) to F(0). The chain is ATP synthase subunit b from Xylella fastidiosa (strain 9a5c).